The primary structure comprises 106 residues: Large ribosomal subunit protein bL21 (106 aa).

This sequence belongs to the bacterial ribosomal protein bL21 family. Part of the 50S ribosomal subunit. Contacts protein L20.

Its function is as follows. This protein binds to 23S rRNA in the presence of protein L20. This chain is Large ribosomal subunit protein bL21, found in Xylella fastidiosa (strain Temecula1 / ATCC 700964).